An 81-amino-acid chain; its full sequence is Photosystem I iron-sulfur center (81 aa).

2 4Fe-4S ferredoxin-type domains span residues 2-31 and 37-68; these read SHSV…MVPW and GQIA…IRVY. 8 residues coordinate [4Fe-4S] cluster: cysteine 11, cysteine 14, cysteine 17, cysteine 21, cysteine 48, cysteine 51, cysteine 54, and cysteine 58.

The cyanobacterial PSI reaction center is composed of one copy each of PsaA,B,C,D,E,F,I,J,K,L,M and X, and forms trimeric complexes. It depends on [4Fe-4S] cluster as a cofactor.

The protein resides in the cellular thylakoid membrane. The catalysed reaction is reduced [plastocyanin] + hnu + oxidized [2Fe-2S]-[ferredoxin] = oxidized [plastocyanin] + reduced [2Fe-2S]-[ferredoxin]. In terms of biological role, apoprotein for the two 4Fe-4S centers FA and FB of photosystem I (PSI); essential for photochemical activity. FB is the terminal electron acceptor of PSI, donating electrons to ferredoxin. The C-terminus interacts with PsaA/B/D and helps assemble the protein into the PSI complex. Required for binding of PsaD and PsaE to PSI. PSI is a plastocyanin/cytochrome c6-ferredoxin oxidoreductase, converting photonic excitation into a charge separation, which transfers an electron from the donor P700 chlorophyll pair to the spectroscopically characterized acceptors A0, A1, FX, FA and FB in turn. This chain is Photosystem I iron-sulfur center, found in Synechococcus sp. (strain RCC307).